Reading from the N-terminus, the 666-residue chain is MGGLRVDLSGAEIRVDPACGAAADDGGSPPVFLPRQPAAPPLLALDIGGTLIKLVYTASCGGGGAELRFAKFERRRMQECFDFVRAQGLVHRNGSTMGSSKENIALKASGGGAYKYTEDFREKLGVCLDKVDEMDSVVSGANFLLQSVPGAAFTHMNGKKSSVDISPNNLFPYLLVNIGSGVSILKVTGNRKFERVTGTHIGGGTMFGLAKLLTGCKSYDEFLQLSQKGDNFVLDLIVKDICGELVCQKQGLSTSTLASSFGKVITSKKKLTDYRPEDLASTLLSAFTYNIAQISFLVASILHLRRVFFGGSYIRGHKSTMQNISYAIDFWSQSKMQAVFLQHEGYLGALGALMSYGDSGDKNMNLEEMKEEENIHESATPIDETSTDEHNDGNIFPYLLVNIGSGVSMIEVTGNGKFERIIGSHLGGGTILGLARLLTGCSSYDEFLELSQRGNNLAVDLTVGDIYGEHGYPKIGLPASTTAASFGKVSSSRLSEYKVEDLAAALLNSFTYNIGQIAYFVANLSGLKRIFFRGAYICGHEKTMDKISHSLKYWSKGQVQTTFLCHEGFLGTLGAFWSYENMGIDGLAAHEVIREVLLGAPYTGQLPSLPLTHQQDNGEDTTIEGEVERLRHDNAVLKAELERLQRENTELKAKLVKSGKPNTFYH.

This sequence belongs to the type II pantothenate kinase family.

The catalysed reaction is (R)-pantothenate + ATP = (R)-4'-phosphopantothenate + ADP + H(+). It participates in cofactor biosynthesis; coenzyme A biosynthesis; CoA from (R)-pantothenate: step 1/5. Regulated by feedback inhibition by malonyl-CoA. Catalyzes the phosphorylation of pantothenate the first step in CoA biosynthesis. May play a role in the physiological regulation of the intracellular CoA concentration. This Oryza sativa subsp. japonica (Rice) protein is Pantothenate kinase 1.